We begin with the raw amino-acid sequence, 85 residues long: uncharacterized protein (85 aa).

This is an uncharacterized protein from Lactococcus phage mv4 (Lactococcus delbrueckii bacteriophage mv4).